Consider the following 398-residue polypeptide: MTLPFADSAQSTLGIEWELALVDAVSGELRSEAPDLLRALHVAEGLADDDVNPHMTSELLQNTVELVTGVHERVDAATADLGRIAARVADAAAARGISLFCQGTHPFADAIAQPSTPSERYDRMLDLTQYWGRQLLIFGVHVHVGLDDVSKAMPVVNGLVNRVPHLLALSASSPFWAGTDTGYQSQRTLLFQQLPTAGLPFQFQEWEDFERCVAQMEQVGMIADVTECRWDVRAVPRLGTVEMRACDGLATLEEIAAVTAYTQCLVDDLSASLERGETVEVLPPWHAQENKWRAARYGMDATVIVDARGTQVPLAEHLPAEIERLTPVAERLGCEAELAGVQAMIDDGGAARQRRVEAQALAGPPAEGEDADDAVAPLRAVVLDAAARTRASLDGRTG.

Belongs to the glutamate--cysteine ligase type 2 family. YbdK subfamily.

It carries out the reaction L-cysteine + L-glutamate + ATP = gamma-L-glutamyl-L-cysteine + ADP + phosphate + H(+). In terms of biological role, ATP-dependent carboxylate-amine ligase which exhibits weak glutamate--cysteine ligase activity. The chain is Putative glutamate--cysteine ligase 2 from Micrococcus luteus (strain ATCC 4698 / DSM 20030 / JCM 1464 / CCM 169 / CCUG 5858 / IAM 1056 / NBRC 3333 / NCIMB 9278 / NCTC 2665 / VKM Ac-2230) (Micrococcus lysodeikticus).